Consider the following 1423-residue polypeptide: Protein Shroom2 (1423 aa).

The disordered stretch occupies residues 1 to 101 (MRPSTVTSRI…PDHTLPKADA (101 aa)). Residues 8-27 (SRIWWSESSSSSSHDLSGSW) show a composition bias toward low complexity. Composition is skewed to polar residues over residues 28–69 (EHTS…NSSI) and 83–93 (GSFSTCSSTPD). Phosphoserine is present on Ser-103. A disordered region spans residues 116–171 (ASRPGSSRQSQSTGDPQGLQDRPSSFLPRVPGNSSKSPRPEDNIEPKIATSGRSNF). Residues 119 to 130 (PGSSRQSQSTGD) show a composition bias toward polar residues. Phosphoserine is present on residues Ser-185, Ser-197, and Ser-291. Disordered stretches follow at residues 300-357 (SYHG…VNQK), 586-630 (TSFQ…SAPR), 758-855 (EILS…SGGQ), 872-930 (PSSS…KLTD), and 1045-1085 (VETP…KEKT). In terms of domain architecture, ASD1 spans 575–677 (LKEAQTRVLK…SEPEKINEVG (103 aa)). Residues 761–771 (SEDRKVEKASE) are compositionally biased toward basic and acidic residues. Phosphoserine is present on residues Ser-806, Ser-830, Ser-831, and Ser-833. Position 834 is a phosphothreonine (Thr-834). Residues 872 to 885 (PSSSVLSSAQPQDS) are compositionally biased toward low complexity. Residues 891-923 (DPTSPQPEAQLSSKCQHLQTSTMETSRSPSPQF) show a composition bias toward polar residues. Ser-918 and Ser-920 each carry phosphoserine. Residues 1054 to 1065 (PEPQPPSTPAPP) show a composition bias toward pro residues. Phosphoserine is present on residues Ser-1072 and Ser-1329. One can recognise an ASD2 domain in the interval 1092-1418 (EELAREIVGK…QLKCLFDSLQ (327 aa)).

Belongs to the shroom family. Interacts with F-actin.

The protein resides in the apical cell membrane. It is found in the cell junction. It localises to the tight junction. The protein localises to the cytoplasm. Its subcellular location is the cytoskeleton. Its function is as follows. May be involved in endothelial cell morphology changes during cell spreading. In the retinal pigment epithelium, may regulate the biogenesis of melanosomes and promote their association with the apical cell surface by inducing gamma-tubulin redistribution. This Rattus norvegicus (Rat) protein is Protein Shroom2 (Shroom2).